A 271-amino-acid chain; its full sequence is Membrane protein insertase YidC 1 (271 aa).

Positions M1–A20 are cleaved as a signal peptide. The N-palmitoyl cysteine moiety is linked to residue C21. C21 carries S-diacylglycerol cysteine lipidation. The next 4 membrane-spanning stretches (helical) occupy residues I45–I65, Y124–L144, P163–L183, and V201–W221.

This sequence belongs to the OXA1/ALB3/YidC family. Type 2 subfamily.

The protein localises to the cell membrane. Required for the insertion and/or proper folding and/or complex formation of integral membrane proteins into the membrane. Involved in integration of membrane proteins that insert both dependently and independently of the Sec translocase complex, as well as at least some lipoproteins. In Streptococcus agalactiae serotype V (strain ATCC BAA-611 / 2603 V/R), this protein is Membrane protein insertase YidC 1.